The primary structure comprises 139 residues: ATP synthase epsilon chain (139 aa).

This sequence belongs to the ATPase epsilon chain family. As to quaternary structure, F-type ATPases have 2 components, CF(1) - the catalytic core - and CF(0) - the membrane proton channel. CF(1) has five subunits: alpha(3), beta(3), gamma(1), delta(1), epsilon(1). CF(0) has three main subunits: a, b and c.

The protein localises to the cell membrane. Functionally, produces ATP from ADP in the presence of a proton gradient across the membrane. The protein is ATP synthase epsilon chain of Enterococcus faecalis (strain ATCC 700802 / V583).